Reading from the N-terminus, the 201-residue chain is Fas apoptotic inhibitory molecule 1 (201 aa).

This sequence belongs to the FAIM1 family.

The protein resides in the cytoplasm. Plays a role as an inducible effector molecule that mediates Fas resistance produced by surface Ig engagement in B cells. This chain is Fas apoptotic inhibitory molecule 1 (Faim), found in Rattus norvegicus (Rat).